The sequence spans 413 residues: Argininosuccinate synthase (413 aa).

ATP is bound by residues alanine 14–serine 22 and alanine 41. Residues tyrosine 94 and serine 99 each coordinate L-citrulline. Residue glycine 124 coordinates ATP. Residues threonine 126, asparagine 130, and aspartate 131 each coordinate L-aspartate. Asparagine 130 provides a ligand contact to L-citrulline. L-citrulline is bound by residues arginine 134, serine 185, serine 194, glutamate 270, and tyrosine 282.

Belongs to the argininosuccinate synthase family. Type 1 subfamily. In terms of assembly, homotetramer.

Its subcellular location is the cytoplasm. The enzyme catalyses L-citrulline + L-aspartate + ATP = 2-(N(omega)-L-arginino)succinate + AMP + diphosphate + H(+). It participates in amino-acid biosynthesis; L-arginine biosynthesis; L-arginine from L-ornithine and carbamoyl phosphate: step 2/3. In Hyphomonas neptunium (strain ATCC 15444), this protein is Argininosuccinate synthase.